The following is a 198-amino-acid chain: Remorin (198 aa).

The segment covering 1–11 (MAELEAKKVEI) has biased composition (basic and acidic residues). Residues 1 to 24 (MAELEAKKVEIVDPAPPAPGPVEA) are disordered. The stretch at 97-184 (EESEKSKAEN…LKAEELAAKY (88 aa)) forms a coiled coil.

The protein belongs to the remorin family. The N-terminus is blocked. In terms of processing, phosphorylated.

It is found in the cell membrane. Its function is as follows. Binds to both simple and complex galacturonides. May be involved in cell-to-cell signaling and molecular transport. This Solanum tuberosum (Potato) protein is Remorin.